A 143-amino-acid chain; its full sequence is Large ribosomal subunit protein uL16c (143 aa).

It belongs to the universal ribosomal protein uL16 family. In terms of assembly, part of the 50S ribosomal subunit.

The protein resides in the plastid. Its subcellular location is the chloroplast. The sequence is that of Large ribosomal subunit protein uL16c from Spirogyra maxima (Green alga).